Reading from the N-terminus, the 169-residue chain is Sorting nexin-24 (169 aa).

Met-1 bears the N-acetylmethionine mark. Residues 1-125 enclose the PX domain; it reads MEVYIPSFRY…SFDETESEES (125 aa). Residues Arg-38, Ser-40, Lys-61, and Arg-74 each coordinate a 1,2-diacyl-sn-glycero-3-phospho-(1D-myo-inositol-3-phosphate). Phosphoserine occurs at positions 113 and 116.

It belongs to the sorting nexin family.

The protein localises to the cytoplasmic vesicle membrane. Functionally, may be involved in several stages of intracellular trafficking. The chain is Sorting nexin-24 (SNX24) from Bos taurus (Bovine).